Consider the following 316-residue polypeptide: uncharacterized protein (316 aa).

This sequence belongs to the chlamydial CPn_0441/CT_007/TC_0275 family.

This is an uncharacterized protein from Chlamydia pneumoniae (Chlamydophila pneumoniae).